A 351-amino-acid polypeptide reads, in one-letter code: (S)-coclaurine N-methyltransferase (351 aa).

Residues 91–92 (QS), 126–134 (VLDLGCGLG), 130–132 (GCG), and 153–158 (TSSVEQ) contribute to the S-adenosyl-L-methionine site. C326 is an active-site residue.

It belongs to the CFA/CMAS family. Expressed in roots, stems, flower buds and at lower levels, in leaves. Restricted to sieve elements of the phloem adjacent or proximal to laticifers.

The protein localises to the cytoplasm. It carries out the reaction (S)-coclaurine + S-adenosyl-L-methionine = (S)-N-methylcoclaurine + S-adenosyl-L-homocysteine + H(+). Its pathway is alkaloid biosynthesis; (S)-reticuline biosynthesis; (S)-reticuline from (S)-norcoclaurine: step 2/4. In terms of biological role, involved in the biosynthesis of benzylisoquinoline alkaloids. N-methyltransferase methylating (S)-coclaurine. 4'-O-methylcoclaurine and norlaudanine can also be used as substrates. The sequence is that of (S)-coclaurine N-methyltransferase from Papaver somniferum (Opium poppy).